The primary structure comprises 464 residues: CD-NTase-associated protein 4 (464 aa).

The interval 1–228 (MSASLLEKQS…FENFICHALE (228 aa)) is N-terminal endonuclease domain. The segment at 229–464 (EDRTQWLSDP…EYMPTAELNI (236 aa)) is C-terminal SAVED domain.

This sequence belongs to the Cap4 nuclease family. A monomer in the absence of cAAA, in its presence it forms oligomers.

DNase activity is activated upon ligand binding. Effector DNase of a CBASS antivirus system. CBASS (cyclic oligonucleotide-based antiphage signaling system) provides immunity against bacteriophage. The CD-NTase protein synthesizes cyclic nucleotides in response to infection; these serve as specific second messenger signals. The signals activate a diverse range of effectors, leading to bacterial cell death and thus abortive phage infection. A type II-C CBASS system. Functionally, probably in the presence of its endogenous cyclic nucleotide (synthesized by the cognate CD-NTase protein in the CBASS operon), or of 2',3',3'-cyclic AMP-AMP-AMP (cAAA) synthesized by Acinetobacter sp. ATCC 27244, endonucleolytically degrades dsDNA in a non-sequence specific manner. It is not activated by other cyclic nucleotides. The polypeptide is CD-NTase-associated protein 4 (Moraxella osloensis).